We begin with the raw amino-acid sequence, 250 residues long: UPF0736 protein YjbA (250 aa).

Belongs to the UPF0736 family.

The chain is UPF0736 protein YjbA (yjbA) from Bacillus subtilis (strain 168).